Reading from the N-terminus, the 110-residue chain is MKFCPKCGNLMLPDRKRKVWVCRSCGYEEPFDEEKDREKTVIKQEVKHKPDEGIVVIEQDLKTLPTTKITCPKCGNDTAYWWEMQTRAGDEPSTIFYKCTKCGHTWRSYE.

Zn(2+) is bound by residues Cys4, Cys7, Cys22, Cys25, Cys71, Cys74, Cys99, and Cys102. A C4-type zinc finger spans residues 4–25 (CPKCGNLMLPDRKRKVWVCRSC). The TFIIS-type zinc finger occupies 67–107 (TKITCPKCGNDTAYWWEMQTRAGDEPSTIFYKCTKCGHTWR).

It belongs to the archaeal RpoM/eukaryotic RPA12/RPB9/RPC11 RNA polymerase family.

Induces RNA cleavage activity in the RNA polymerase. In its presence, the cleavage activity of the RNA polymerase truncates the RNA back to position +15 in a stepwise manner by releasing mainly dinucleotides from the 3'-end of the nascent RNA. The truncated RNAs are able to continue elongation. Involved in transcriptional proofreading and fidelity. Misincorporation of nucleotides during elongation of transcription leads to arrested elongation complexes which are rescued by TFS-promoted removal of a dinucleotide from the 3'-end. TFS is able to induce a cleavage resynthesis cycle in stalled elongation complexes (resulting from the next missing nucleotide or a reduced incorporation rate of a wrong nucleotide) preventing misincorporation and enabling proofreading in a post-incorporation manner. Pausing of elongation complexes is the main determinant of TFS-induced RNA cleavage. This chain is Transcription factor S, found in Thermococcus celer.